Consider the following 155-residue polypeptide: Large ribosomal subunit protein uL15 (155 aa).

Positions 1-63 (MKLHELAPNP…QMPLTRRLPK (63 aa)) are disordered. 2 stretches are compositionally biased toward gly residues: residues 21 to 31 (RGIGSGLGKTS) and 42 to 52 (SGGGVRPGFEG).

Belongs to the universal ribosomal protein uL15 family. As to quaternary structure, part of the 50S ribosomal subunit.

Functionally, binds to the 23S rRNA. The polypeptide is Large ribosomal subunit protein uL15 (Symbiobacterium thermophilum (strain DSM 24528 / JCM 14929 / IAM 14863 / T)).